Consider the following 552-residue polypeptide: Small ribosomal subunit protein bS1 (552 aa).

6 S1 motif domains span residues 31-101 (TIKE…ISQQ), 116-179 (NAII…ISRK), 200-268 (TEPV…LSIK), 285-355 (GYAI…VSLK), 372-440 (GDIV…LSAK), and 457-521 (DSVI…ASVH).

Belongs to the bacterial ribosomal protein bS1 family.

Binds mRNA; thus facilitating recognition of the initiation point. It is needed to translate mRNA with a short Shine-Dalgarno (SD) purine-rich sequence. The sequence is that of Small ribosomal subunit protein bS1 (rpsA) from Helicobacter pylori (strain J99 / ATCC 700824) (Campylobacter pylori J99).